An 88-amino-acid chain; its full sequence is Cell division topological specificity factor (88 aa).

This sequence belongs to the MinE family.

In terms of biological role, prevents the cell division inhibition by proteins MinC and MinD at internal division sites while permitting inhibition at polar sites. This ensures cell division at the proper site by restricting the formation of a division septum at the midpoint of the long axis of the cell. This is Cell division topological specificity factor from Cronobacter sakazakii (strain ATCC BAA-894) (Enterobacter sakazakii).